A 130-amino-acid polypeptide reads, in one-letter code: Glycine cleavage system H protein (130 aa).

A Lipoyl-binding domain is found at 25 to 107 (IATIGITEFA…YGEGWFLKVR (83 aa)). Lysine 66 is modified (N6-lipoyllysine).

This sequence belongs to the GcvH family. The glycine cleavage system is composed of four proteins: P, T, L and H. Requires (R)-lipoate as cofactor.

The glycine cleavage system catalyzes the degradation of glycine. The H protein shuttles the methylamine group of glycine from the P protein to the T protein. The protein is Glycine cleavage system H protein of Trichormus variabilis (strain ATCC 29413 / PCC 7937) (Anabaena variabilis).